Consider the following 201-residue polypeptide: Small ribosomal subunit protein uS4c (201 aa).

The region spanning Met89 to Leu152 is the S4 RNA-binding domain.

Belongs to the universal ribosomal protein uS4 family. Part of the 30S ribosomal subunit. Contacts protein S5. The interaction surface between S4 and S5 is involved in control of translational fidelity.

It localises to the plastid. Its subcellular location is the chloroplast. In terms of biological role, one of the primary rRNA binding proteins, it binds directly to 16S rRNA where it nucleates assembly of the body of the 30S subunit. With S5 and S12 plays an important role in translational accuracy. This Olimarabidopsis pumila (Dwarf rocket) protein is Small ribosomal subunit protein uS4c (rps4).